Reading from the N-terminus, the 253-residue chain is Imidazole glycerol phosphate synthase subunit HisF (253 aa).

Active-site residues include Asp-11 and Asp-130.

Belongs to the HisA/HisF family. In terms of assembly, heterodimer of HisH and HisF.

The protein resides in the cytoplasm. It carries out the reaction 5-[(5-phospho-1-deoxy-D-ribulos-1-ylimino)methylamino]-1-(5-phospho-beta-D-ribosyl)imidazole-4-carboxamide + L-glutamine = D-erythro-1-(imidazol-4-yl)glycerol 3-phosphate + 5-amino-1-(5-phospho-beta-D-ribosyl)imidazole-4-carboxamide + L-glutamate + H(+). It participates in amino-acid biosynthesis; L-histidine biosynthesis; L-histidine from 5-phospho-alpha-D-ribose 1-diphosphate: step 5/9. IGPS catalyzes the conversion of PRFAR and glutamine to IGP, AICAR and glutamate. The HisF subunit catalyzes the cyclization activity that produces IGP and AICAR from PRFAR using the ammonia provided by the HisH subunit. This chain is Imidazole glycerol phosphate synthase subunit HisF, found in Dehalococcoides mccartyi (strain ATCC BAA-2100 / JCM 16839 / KCTC 5957 / BAV1).